A 669-amino-acid chain; its full sequence is Bestrophin-3 (669 aa).

Topologically, residues 1-31 are cytoplasmic; the sequence is MTVTYSSKVANATFFGFHRLLLKWRGSIYKL. Ala10 provides a ligand contact to Ca(2+). The helical transmembrane segment at 32 to 51 threads the bilayer; it reads LYREFIVFAVLYTAISLVYR. Residues 52 to 60 are Extracellular-facing; it reads LLLTGAQKR. The chain crosses the membrane as a helical span at residues 61–82; sequence YFEKLSIYCDRYAEQIPVTFVL. Residues 83–237 lie on the Cytoplasmic side of the membrane; it reads GFYVTLVVNR…DWVGIPLVYT (155 aa). Residues 238–255 traverse the membrane as a helical segment; that stretch reads QVVTLAVYTFFFACLIGR. At 256-274 the chain is on the extracellular side; the sequence is QFLDPTKGYVGHDLDLYVP. The helical transmembrane segment at 275–288 threads the bilayer; the sequence is IFTLLQFFFYAGWL. Residues 289-669 lie on the Cytoplasmic side of the membrane; that stretch reads KVAEQLINPF…GTPQRPRTWF (381 aa). Ca(2+)-binding residues include Gln293, Asn296, Asp301, and Asp304. 4 disordered regions span residues 399–496, 533–560, 591–627, and 646–669; these read LSTH…TKMP, QPSG…SAST, TSLG…GAGS, and ILEF…RTWF. Basic residues predominate over residues 440–451; sequence NPHRGSPTRKQS. A compositionally biased stretch (low complexity) spans 475–492; sequence RTSTLQSLSPQSSVRSSP. Residues 533–543 show a composition bias toward polar residues; it reads QPSGTEQQVEP. Residues 646-656 are compositionally biased toward basic and acidic residues; the sequence is ILEFNNEHTGE.

The protein belongs to the anion channel-forming bestrophin (TC 1.A.46) family. Calcium-sensitive chloride channel subfamily. In terms of tissue distribution, expressed in heart. As to expression, expressed in brain, retina/retinal pigment epithelium (RPE) and skeletal muscle. Expressed in acinar cells of parotid glands. Expressed in lung, kidney and testis.

The protein resides in the cell membrane. It catalyses the reaction chloride(in) = chloride(out). Its function is as follows. Ligand-gated anion channel that allows the movement of chloride monoatomic anions across cell membranes when activated by calcium (Ca2+). Functionally, does not function as calcium-gated chloride channel. The sequence is that of Bestrophin-3 (Best3) from Mus musculus (Mouse).